We begin with the raw amino-acid sequence, 573 residues long: 2-succinyl-5-enolpyruvyl-6-hydroxy-3-cyclohexene-1-carboxylate synthase (573 aa).

It belongs to the TPP enzyme family. MenD subfamily. In terms of assembly, homodimer. Mg(2+) serves as cofactor. Requires Mn(2+) as cofactor. It depends on thiamine diphosphate as a cofactor.

The enzyme catalyses isochorismate + 2-oxoglutarate + H(+) = 5-enolpyruvoyl-6-hydroxy-2-succinyl-cyclohex-3-ene-1-carboxylate + CO2. Its pathway is quinol/quinone metabolism; 1,4-dihydroxy-2-naphthoate biosynthesis; 1,4-dihydroxy-2-naphthoate from chorismate: step 2/7. It participates in quinol/quinone metabolism; menaquinone biosynthesis. In terms of biological role, catalyzes the thiamine diphosphate-dependent decarboxylation of 2-oxoglutarate and the subsequent addition of the resulting succinic semialdehyde-thiamine pyrophosphate anion to isochorismate to yield 2-succinyl-5-enolpyruvyl-6-hydroxy-3-cyclohexene-1-carboxylate (SEPHCHC). The chain is 2-succinyl-5-enolpyruvyl-6-hydroxy-3-cyclohexene-1-carboxylate synthase from Shewanella baltica (strain OS155 / ATCC BAA-1091).